Consider the following 511-residue polypeptide: Thioredoxin reductase 2, mitochondrial (511 aa).

A mitochondrion-targeting transit peptide spans 1–21 (MAALRGAAARFRGRAPGGARG). Residue 29–58 (DLLVIGGGSGGLACAKEAAQLGKKVAVLDY) coordinates FAD. A disulfide bridge connects residues Cys74 and Cys79. Lys316 carries the post-translational modification N6-succinyllysine. Catalysis depends on His484, which acts as the Proton acceptor. The segment at residues 509–510 (CU) is a cross-link (cysteinyl-selenocysteine (Cys-Sec)). Sec510 is a non-standard amino acid (selenocysteine).

Belongs to the class-I pyridine nucleotide-disulfide oxidoreductase family. As to quaternary structure, homodimer. FAD is required as a cofactor.

The protein resides in the mitochondrion. It carries out the reaction [thioredoxin]-dithiol + NADP(+) = [thioredoxin]-disulfide + NADPH + H(+). With respect to regulation, inhibited by 1-chloro-2,4-dinitrobenzene and by zinc, calcium, magnesium and Fe(2+) ions. Involved in the control of reactive oxygen species levels and the regulation of mitochondrial redox homeostasis. Maintains thioredoxin in a reduced state. May play a role in redox-regulated cell signaling. The protein is Thioredoxin reductase 2, mitochondrial (TXNRD2) of Bos taurus (Bovine).